Here is a 183-residue protein sequence, read N- to C-terminus: Glutathione-regulated potassium-efflux system ancillary protein KefG (183 aa).

The protein belongs to the NAD(P)H dehydrogenase (quinone) family. KefG subfamily. In terms of assembly, interacts with KefB.

Its subcellular location is the cell inner membrane. It catalyses the reaction a quinone + NADH + H(+) = a quinol + NAD(+). It carries out the reaction a quinone + NADPH + H(+) = a quinol + NADP(+). Regulatory subunit of a potassium efflux system that confers protection against electrophiles. Required for full activity of KefB. The chain is Glutathione-regulated potassium-efflux system ancillary protein KefG from Salmonella enteritidis PT4 (strain P125109).